A 143-amino-acid polypeptide reads, in one-letter code: uncharacterized protein (143 aa).

It is found in the cytoplasm. Its subcellular location is the nucleus. This is an uncharacterized protein from Schizosaccharomyces pombe (strain 972 / ATCC 24843) (Fission yeast).